A 428-amino-acid polypeptide reads, in one-letter code: Adenylosuccinate synthetase (428 aa).

GTP contacts are provided by residues 12 to 18 and 40 to 42; these read GDEGKGK and GHT. The active-site Proton acceptor is D13. Positions 13 and 40 each coordinate Mg(2+). Residues 13–16, 38–41, T128, R142, Q222, T237, and R301 contribute to the IMP site; these read DEGK and NAGH. The active-site Proton donor is the H41. 297–303 contributes to the substrate binding site; that stretch reads TVTGRSR. Residues R303, 329–331, and 411–413 contribute to the GTP site; these read KLD and STS.

It belongs to the adenylosuccinate synthetase family. As to quaternary structure, homodimer. It depends on Mg(2+) as a cofactor.

It is found in the cytoplasm. The catalysed reaction is IMP + L-aspartate + GTP = N(6)-(1,2-dicarboxyethyl)-AMP + GDP + phosphate + 2 H(+). The protein operates within purine metabolism; AMP biosynthesis via de novo pathway; AMP from IMP: step 1/2. Its function is as follows. Plays an important role in the de novo pathway of purine nucleotide biosynthesis. Catalyzes the first committed step in the biosynthesis of AMP from IMP. This is Adenylosuccinate synthetase from Phenylobacterium zucineum (strain HLK1).